Reading from the N-terminus, the 635-residue chain is BTB/POZ domain and ankyrin repeat-containing protein NPR2 (635 aa).

Residues 97-191 (SDADVDVADG…LYTGKLRPAP (95 aa)) enclose the BTB domain. A compositionally biased stretch (gly residues) spans 138–152 (AAGGGGGGGGGGGER). Positions 138–157 (AAGGGGGGGGGGGERTGGRP) are disordered. The C2HC NPR-type zinc-finger motif lies at 194 to 208 (VVSCADPMCPHDSCP). 4 residues coordinate Zn(2+): Cys197, Cys202, His204, and Cys207. ANK repeat units lie at residues 317–347 (KRVR…TLDD), 349–376 (NALH…NLNL), and 380–409 (RGYT…AVSQ). Residues 439–576 (ESNKDRLCID…FLEDDLPDSP (138 aa)) are salicylic acid-binding core (SBC). Residue Arg484 coordinates salicylate.

The protein belongs to the plant 'ANKYRIN-BTB/POZ' family. 'NPR1-like' subfamily. In terms of assembly, interacts with NRR. Interacts with TGAL1 and TGAL11.

The protein localises to the nucleus. Its pathway is protein modification; protein ubiquitination. In terms of biological role, salicylic acid (SA)-binding substrate-specific adapter of an E3 ubiquitin-protein ligase complex (CUL3-RBX1-BTB) which mediates the ubiquitination and subsequent proteasomal degradation of target proteins. May be involved in regulating basal defense responses against pathogens, and may be involved in crosstalk between SA- and JA-dependent signaling pathways. Does not seem to be involved in defense response against the bacterial blight disease caused by Xanthomonas oryzae pv. oryzae (Xoo). Over-expression of NPR2/NH2 does not confer disease resistance to Xoo. This Oryza sativa subsp. japonica (Rice) protein is BTB/POZ domain and ankyrin repeat-containing protein NPR2.